Reading from the N-terminus, the 328-residue chain is dITP/XTP pyrophosphatase (328 aa).

The interval 1-129 (MSEKIYEYKD…ATSEQGFGDT (129 aa)) is unknown. Residues 130–324 (ILIATRNEGK…KLMEVFPAWQ (195 aa)) form an NTP pyrophosphatase region. 134-139 (TRNEGK) provides a ligand contact to substrate. Catalysis depends on Asp-196, which acts as the Proton acceptor. Asp-196 provides a ligand contact to Mg(2+). Residues Ser-197, 280–283 (FGYD), Lys-303, and 308–309 (HR) each bind substrate.

This sequence belongs to the HAM1 NTPase family. As to quaternary structure, homodimer. It depends on Mg(2+) as a cofactor.

The catalysed reaction is XTP + H2O = XMP + diphosphate + H(+). It catalyses the reaction dITP + H2O = dIMP + diphosphate + H(+). It carries out the reaction ITP + H2O = IMP + diphosphate + H(+). Its function is as follows. Pyrophosphatase that catalyzes the hydrolysis of nucleoside triphosphates to their monophosphate derivatives, with a high preference for the non-canonical purine nucleotides XTP (xanthosine triphosphate), dITP (deoxyinosine triphosphate) and ITP. Seems to function as a house-cleaning enzyme that removes non-canonical purine nucleotides from the nucleotide pool, thus preventing their incorporation into DNA/RNA and avoiding chromosomal lesions. This is dITP/XTP pyrophosphatase from Streptococcus pyogenes serotype M6 (strain ATCC BAA-946 / MGAS10394).